Here is a 353-residue protein sequence, read N- to C-terminus: Probable peptidoglycan glycosyltransferase FtsW (353 aa).

A run of 8 helical transmembrane segments spans residues 26-46 (IFYFFLIFLLSFILLRIPMSF), 53-73 (LILIISIFLLTIVLLIGKSVH), 115-135 (FWGFLKPITIIIIQSVLLLAE), 137-157 (DLGTVIVLFLTTLSVLFLSGV), 162-182 (FFIIIFFVTLIITALVLFEPY), 242-262 (IIGEELGYIGCFLILLMIFFI), 288-308 (IGLWFSFQTLINIGAVTGILP), and 314-334 (LPLISYGGSSLIVNLMAICIL).

The protein belongs to the SEDS family. FtsW subfamily.

It is found in the cell inner membrane. It carries out the reaction [GlcNAc-(1-&gt;4)-Mur2Ac(oyl-L-Ala-gamma-D-Glu-L-Lys-D-Ala-D-Ala)](n)-di-trans,octa-cis-undecaprenyl diphosphate + beta-D-GlcNAc-(1-&gt;4)-Mur2Ac(oyl-L-Ala-gamma-D-Glu-L-Lys-D-Ala-D-Ala)-di-trans,octa-cis-undecaprenyl diphosphate = [GlcNAc-(1-&gt;4)-Mur2Ac(oyl-L-Ala-gamma-D-Glu-L-Lys-D-Ala-D-Ala)](n+1)-di-trans,octa-cis-undecaprenyl diphosphate + di-trans,octa-cis-undecaprenyl diphosphate + H(+). It functions in the pathway cell wall biogenesis; peptidoglycan biosynthesis. Its function is as follows. Peptidoglycan polymerase that is essential for cell division. The protein is Probable peptidoglycan glycosyltransferase FtsW of Buchnera aphidicola subsp. Schizaphis graminum (strain Sg).